The chain runs to 140 residues: uncharacterized protein (140 aa).

In terms of domain architecture, N-acetyltransferase spans 2 to 140 (KAVIAKNEEQ…GIPHLQMMKD (139 aa)).

It belongs to the acetyltransferase family.

This is an uncharacterized protein from Bacillus subtilis (strain 168).